We begin with the raw amino-acid sequence, 334 residues long: Serine/Arginine-related protein 53 (334 aa).

Basic and acidic residues predominate over residues 1-13 (MGRRSSDTEEESR). Disordered stretches follow at residues 1 to 173 (MGRR…IKAG), 201 to 222 (LKAK…QATL), and 241 to 290 (VQQT…SIPT). Residues 14-24 (SKRKKKHRRRS) are compositionally biased toward basic residues. The span at 44 to 62 (PRSESRSWSRDRQPRSHSY) shows a compositional bias: basic and acidic residues. The segment covering 78-118 (SRRKRSRSRSRGRGKSYRVQRSRSKSRTRRSRSRPRPRSHS) has biased composition (basic residues). Basic and acidic residues-rich tracts occupy residues 132-166 (RSRD…KRGD), 201-218 (LKAK…KEED), and 247-262 (SSKD…EVKH). The stretch at 180–234 (AEQAKARLQLVLEAAAKADEALKAKERNEEEAKRRKEEDQATLGEQVKRVKEIEA) forms a coiled coil.

In terms of assembly, interacts (via Arg/Ser-rich domain) with LUC7L3, RBM39 and RSF1. Post-translationally, phosphorylated.

Its subcellular location is the nucleus speckle. The protein localises to the nucleus. It localises to the cytoplasm. Plays a role in pre-mRNA splicing. Involved in both constitutive and alternative pre-mRNA splicing. May have a role in the recognition of the 3' splice site during the second step of splicing. The protein is Serine/Arginine-related protein 53 (Rsrc1) of Rattus norvegicus (Rat).